The following is a 351-amino-acid chain: N-acetyl-gamma-glutamyl-phosphate reductase (351 aa).

C154 is a catalytic residue.

The protein belongs to the NAGSA dehydrogenase family. Type 1 subfamily.

It localises to the cytoplasm. The enzyme catalyses N-acetyl-L-glutamate 5-semialdehyde + phosphate + NADP(+) = N-acetyl-L-glutamyl 5-phosphate + NADPH + H(+). It participates in amino-acid biosynthesis; L-arginine biosynthesis; N(2)-acetyl-L-ornithine from L-glutamate: step 3/4. Catalyzes the NADPH-dependent reduction of N-acetyl-5-glutamyl phosphate to yield N-acetyl-L-glutamate 5-semialdehyde. In Prochlorococcus marinus (strain MIT 9215), this protein is N-acetyl-gamma-glutamyl-phosphate reductase.